The sequence spans 163 residues: Gas vesicle protein H2 (163 aa).

Positions 57–92 (LGSDARSPSTPAGNADDAGDAETAHIETRASDDSDD) are disordered. Positions 78–88 (ETAHIETRASD) are enriched in basic and acidic residues.

Belongs to the gas vesicle GvpH family. In terms of assembly, gvpF to GvpM interact with each other in vitro, and may form multi-subunit complex(es). Interacts with GvpC. Might interact with GvpA.

It localises to the gas vesicle. The protein localises to the cytoplasm. In terms of biological role, a minor component of the gas vesicle, also found in soluble extracts. Proteins GvpF to GvpM might be involved in nucleating gas vesicle formation. Gas vesicles are hollow, gas filled proteinaceous nanostructures found in several microbial planktonic microorganisms. They allow positioning of halobacteria at the optimal depth for growth in the poorly aerated, shallow brine pools of their habitat. Its function is as follows. Expression of 2 c-vac DNA fragments containing 2 divergently transcribed regions (gvpE-gvpF-gvpG-gvpH-gvpI-gvpJ-gvpK-gvpL-gvpM and gvpA-gvpC-gvpN-gvpO) allows H.volcanii to produce gas vesicles. This Halobacterium salinarum (strain ATCC 700922 / JCM 11081 / NRC-1) (Halobacterium halobium) protein is Gas vesicle protein H2.